Consider the following 255-residue polypeptide: 5-oxoprolinase subunit A (255 aa).

Belongs to the LamB/PxpA family. In terms of assembly, forms a complex composed of PxpA, PxpB and PxpC.

It carries out the reaction 5-oxo-L-proline + ATP + 2 H2O = L-glutamate + ADP + phosphate + H(+). In terms of biological role, catalyzes the cleavage of 5-oxoproline to form L-glutamate coupled to the hydrolysis of ATP to ADP and inorganic phosphate. The sequence is that of 5-oxoprolinase subunit A from Thermococcus sibiricus (strain DSM 12597 / MM 739).